The primary structure comprises 283 residues: Putative F-box protein At1g60370 (283 aa).

An F-box domain is found at 4–53 (GEKLESIPIDLIIEIHSRLPAESVARFRCVSKLWGSMFRRPYFTELFLTR).

This is Putative F-box protein At1g60370 from Arabidopsis thaliana (Mouse-ear cress).